We begin with the raw amino-acid sequence, 209 residues long: Ribosomal RNA large subunit methyltransferase E (209 aa).

S-adenosyl-L-methionine-binding residues include glycine 63, tryptophan 65, aspartate 83, aspartate 99, and aspartate 124. Catalysis depends on lysine 164, which acts as the Proton acceptor.

This sequence belongs to the class I-like SAM-binding methyltransferase superfamily. RNA methyltransferase RlmE family.

The protein localises to the cytoplasm. It catalyses the reaction uridine(2552) in 23S rRNA + S-adenosyl-L-methionine = 2'-O-methyluridine(2552) in 23S rRNA + S-adenosyl-L-homocysteine + H(+). Specifically methylates the uridine in position 2552 of 23S rRNA at the 2'-O position of the ribose in the fully assembled 50S ribosomal subunit. The chain is Ribosomal RNA large subunit methyltransferase E from Shewanella sp. (strain ANA-3).